The chain runs to 178 residues: Inorganic pyrophosphatase (178 aa).

Residues lysine 30, arginine 44, and tyrosine 56 each contribute to the substrate site. Mg(2+)-binding residues include aspartate 66, aspartate 71, and aspartate 103. Position 140 (tyrosine 140) interacts with substrate.

The protein belongs to the PPase family. In terms of assembly, homohexamer. It depends on Mg(2+) as a cofactor.

The protein resides in the cytoplasm. The enzyme catalyses diphosphate + H2O = 2 phosphate + H(+). Its function is as follows. Catalyzes the hydrolysis of inorganic pyrophosphate (PPi) forming two phosphate ions. This Pyrococcus horikoshii (strain ATCC 700860 / DSM 12428 / JCM 9974 / NBRC 100139 / OT-3) protein is Inorganic pyrophosphatase.